A 489-amino-acid polypeptide reads, in one-letter code: 3-octaprenyl-4-hydroxybenzoate carboxy-lyase (489 aa).

Mn(2+) is bound at residue Asn-172. Prenylated FMN is bound by residues 175–177, 189–191, and 194–195; these read IYR, RWL, and RG. Glu-238 lines the Mn(2+) pocket. Asp-287 (proton donor) is an active-site residue.

It belongs to the UbiD family. Homohexamer. Prenylated FMN serves as cofactor. It depends on Mn(2+) as a cofactor.

The protein localises to the cell membrane. It catalyses the reaction a 4-hydroxy-3-(all-trans-polyprenyl)benzoate + H(+) = a 2-(all-trans-polyprenyl)phenol + CO2. It participates in cofactor biosynthesis; ubiquinone biosynthesis. Functionally, catalyzes the decarboxylation of 3-octaprenyl-4-hydroxy benzoate to 2-octaprenylphenol, an intermediate step in ubiquinone biosynthesis. The polypeptide is 3-octaprenyl-4-hydroxybenzoate carboxy-lyase (Tolumonas auensis (strain DSM 9187 / NBRC 110442 / TA 4)).